The following is an 88-amino-acid chain: Cell division topological specificity factor (88 aa).

The protein belongs to the MinE family.

In terms of biological role, prevents the cell division inhibition by proteins MinC and MinD at internal division sites while permitting inhibition at polar sites. This ensures cell division at the proper site by restricting the formation of a division septum at the midpoint of the long axis of the cell. This Paracidovorax citrulli (strain AAC00-1) (Acidovorax citrulli) protein is Cell division topological specificity factor.